Reading from the N-terminus, the 252-residue chain is Triosephosphate isomerase (252 aa).

10 to 12 provides a ligand contact to substrate; it reads NWK. Catalysis depends on histidine 96, which acts as the Electrophile. Glutamate 168 serves as the catalytic Proton acceptor. Substrate is bound by residues glycine 174, serine 214, and 235–236; that span reads GG.

It belongs to the triosephosphate isomerase family. As to quaternary structure, homodimer.

The protein localises to the cytoplasm. The enzyme catalyses D-glyceraldehyde 3-phosphate = dihydroxyacetone phosphate. It participates in carbohydrate biosynthesis; gluconeogenesis. Its pathway is carbohydrate degradation; glycolysis; D-glyceraldehyde 3-phosphate from glycerone phosphate: step 1/1. Its function is as follows. Involved in the gluconeogenesis. Catalyzes stereospecifically the conversion of dihydroxyacetone phosphate (DHAP) to D-glyceraldehyde-3-phosphate (G3P). This chain is Triosephosphate isomerase, found in Streptococcus pyogenes serotype M5 (strain Manfredo).